A 488-amino-acid polypeptide reads, in one-letter code: Phenylalanine--tRNA ligase alpha subunit (488 aa).

Residues T332, 371–373 (QLD), and F410 each bind L-phenylalanine. Position 412 (E412) interacts with Mg(2+). F435 lines the L-phenylalanine pocket.

This sequence belongs to the class-II aminoacyl-tRNA synthetase family. Phe-tRNA synthetase alpha subunit type 2 subfamily. Tetramer of two alpha and two beta subunits. The cofactor is Mg(2+).

The protein resides in the cytoplasm. It carries out the reaction tRNA(Phe) + L-phenylalanine + ATP = L-phenylalanyl-tRNA(Phe) + AMP + diphosphate + H(+). This is Phenylalanine--tRNA ligase alpha subunit from Aeropyrum pernix (strain ATCC 700893 / DSM 11879 / JCM 9820 / NBRC 100138 / K1).